The following is a 425-amino-acid chain: Histidinol dehydrogenase (425 aa).

3 residues coordinate NAD(+): tyrosine 124, glutamine 184, and asparagine 207. Substrate contacts are provided by serine 230, glutamine 252, and histidine 255. The Zn(2+) site is built by glutamine 252 and histidine 255. Residues glutamate 321 and histidine 322 each act as proton acceptor in the active site. Histidine 322, aspartate 355, glutamate 409, and histidine 414 together coordinate substrate. Aspartate 355 serves as a coordination point for Zn(2+). Residue histidine 414 participates in Zn(2+) binding.

This sequence belongs to the histidinol dehydrogenase family. Zn(2+) serves as cofactor.

It carries out the reaction L-histidinol + 2 NAD(+) + H2O = L-histidine + 2 NADH + 3 H(+). Its pathway is amino-acid biosynthesis; L-histidine biosynthesis; L-histidine from 5-phospho-alpha-D-ribose 1-diphosphate: step 9/9. Functionally, catalyzes the sequential NAD-dependent oxidations of L-histidinol to L-histidinaldehyde and then to L-histidine. In Halobacterium salinarum (strain ATCC 700922 / JCM 11081 / NRC-1) (Halobacterium halobium), this protein is Histidinol dehydrogenase.